A 238-amino-acid polypeptide reads, in one-letter code: Ribonuclease HII (238 aa).

Positions 23 to 215 (QRLCGVDEAG…VREALARLPM (193 aa)) constitute an RNase H type-2 domain. Residues Asp29, Glu30, and Asp124 each coordinate a divalent metal cation.

The protein belongs to the RNase HII family. The cofactor is Mn(2+). It depends on Mg(2+) as a cofactor.

It localises to the cytoplasm. The catalysed reaction is Endonucleolytic cleavage to 5'-phosphomonoester.. Endonuclease that specifically degrades the RNA of RNA-DNA hybrids. The protein is Ribonuclease HII of Cupriavidus necator (strain ATCC 17699 / DSM 428 / KCTC 22496 / NCIMB 10442 / H16 / Stanier 337) (Ralstonia eutropha).